The following is a 180-amino-acid chain: Bifunctional protein PyrR (180 aa).

The PRPP-binding signature appears at 101-113 (VILVDDVLYTGRT).

Belongs to the purine/pyrimidine phosphoribosyltransferase family. PyrR subfamily. Homodimer and homohexamer; in equilibrium.

The enzyme catalyses UMP + diphosphate = 5-phospho-alpha-D-ribose 1-diphosphate + uracil. Its function is as follows. Regulates transcriptional attenuation of the pyrimidine nucleotide (pyr) operon by binding in a uridine-dependent manner to specific sites on pyr mRNA. This disrupts an antiterminator hairpin in the RNA and favors formation of a downstream transcription terminator, leading to a reduced expression of downstream genes. Functionally, also displays a weak uracil phosphoribosyltransferase activity which is not physiologically significant. This Bacillus mycoides (strain KBAB4) (Bacillus weihenstephanensis) protein is Bifunctional protein PyrR.